Here is a 499-residue protein sequence, read N- to C-terminus: Probable cytosol aminopeptidase (499 aa).

Mn(2+) is bound by residues lysine 267 and aspartate 272. Lysine 279 is a catalytic residue. Mn(2+) contacts are provided by aspartate 290, aspartate 349, and glutamate 351. Arginine 353 is an active-site residue.

Belongs to the peptidase M17 family. Mn(2+) serves as cofactor.

It localises to the cytoplasm. The catalysed reaction is Release of an N-terminal amino acid, Xaa-|-Yaa-, in which Xaa is preferably Leu, but may be other amino acids including Pro although not Arg or Lys, and Yaa may be Pro. Amino acid amides and methyl esters are also readily hydrolyzed, but rates on arylamides are exceedingly low.. It catalyses the reaction Release of an N-terminal amino acid, preferentially leucine, but not glutamic or aspartic acids.. Presumably involved in the processing and regular turnover of intracellular proteins. Catalyzes the removal of unsubstituted N-terminal amino acids from various peptides. The sequence is that of Probable cytosol aminopeptidase from Buchnera aphidicola subsp. Acyrthosiphon pisum (strain Tuc7).